The sequence spans 198 residues: Segregation and condensation protein B (198 aa).

It belongs to the ScpB family. As to quaternary structure, homodimer. Homodimerization may be required to stabilize the binding of ScpA to the Smc head domains. Component of a cohesin-like complex composed of ScpA, ScpB and the Smc homodimer, in which ScpA and ScpB bind to the head domain of Smc. The presence of the three proteins is required for the association of the complex with DNA.

Its subcellular location is the cytoplasm. Participates in chromosomal partition during cell division. May act via the formation of a condensin-like complex containing Smc and ScpA that pull DNA away from mid-cell into both cell halves. The polypeptide is Segregation and condensation protein B (Streptococcus mutans serotype c (strain ATCC 700610 / UA159)).